The chain runs to 252 residues: Indole-3-glycerol phosphate synthase (252 aa).

This sequence belongs to the TrpC family.

It carries out the reaction 1-(2-carboxyphenylamino)-1-deoxy-D-ribulose 5-phosphate + H(+) = (1S,2R)-1-C-(indol-3-yl)glycerol 3-phosphate + CO2 + H2O. The protein operates within amino-acid biosynthesis; L-tryptophan biosynthesis; L-tryptophan from chorismate: step 4/5. The protein is Indole-3-glycerol phosphate synthase of Listeria monocytogenes serotype 4a (strain HCC23).